A 245-amino-acid chain; its full sequence is 1-(5-phosphoribosyl)-5-[(5-phosphoribosylamino)methylideneamino] imidazole-4-carboxamide isomerase (245 aa).

Asp7 (proton acceptor) is an active-site residue. Residue Asp129 is the Proton donor of the active site.

It belongs to the HisA/HisF family.

It is found in the cytoplasm. It carries out the reaction 1-(5-phospho-beta-D-ribosyl)-5-[(5-phospho-beta-D-ribosylamino)methylideneamino]imidazole-4-carboxamide = 5-[(5-phospho-1-deoxy-D-ribulos-1-ylimino)methylamino]-1-(5-phospho-beta-D-ribosyl)imidazole-4-carboxamide. Its pathway is amino-acid biosynthesis; L-histidine biosynthesis; L-histidine from 5-phospho-alpha-D-ribose 1-diphosphate: step 4/9. In Escherichia fergusonii (strain ATCC 35469 / DSM 13698 / CCUG 18766 / IAM 14443 / JCM 21226 / LMG 7866 / NBRC 102419 / NCTC 12128 / CDC 0568-73), this protein is 1-(5-phosphoribosyl)-5-[(5-phosphoribosylamino)methylideneamino] imidazole-4-carboxamide isomerase.